Here is a 962-residue protein sequence, read N- to C-terminus: MTKQTLTQLEQHDLFLRRHIGPDSSQQQEMLNYVGAESLDDLTAQIVPESIRLSQELSIGDSCGEAEGIAYIRGLAKQNQVFKSYIGMGYYGTQVPNVILRNVLENPGWYTAYTPYQPEIAQGRLEAILNFQQVSMDLTGLDLASASLLDEATAAAEAMALAKRVSKAKKANIFFVADDVFPQTLDVVKTRAECFGFEVVVGPASEAVNHELFGALFQYSNRFGQITDFTDLFAELRAKNVIVTVAADIMSLVLLKSPGSMGADVVFGSAQRFGVPMGFGGPHAAFFVARDEHKRSMPGRIIGVSKDTRGNRALRMAMQTREQHIRREKANSNICTAQILLANMASFYAVFHGPQGLKTIASRINRFADILAAGLQAKGVSLVNNTWFDTISIKGLDVAAVNARALAAEMNLRFDADGIVGVSLDETTIRTDIDALFEVILGAGHGLDVAALDAQIVAQGSQSIPASLVREDAILSHPTFNRYQSETEMMRYIKRLESKDLALNYSMISLGSCTMKLNAAVEMIPVSWPEFANMHPFCPLDQAKGYTQLIEELSSWLVNVTGYDAVCIQPNSGAQGEYAGLLAIRKYHESRGEAHRNICLIPQSAHGTNPASAQLAGMQVVVTACDKQGNVDLEDLKAKAAEVAENLSCIMITYPSTHGVYEETVREICNIVHQHGGQVYLDGANMNAQVGLTSPGFIGADVSHLNLHKTFAIPHGGGGPGMGPIGVKAHLAPFVAGHVVVKPGRESDNNGAVSAAPYGSAGILPISWMYIKLLGSKGLKKSTQTALLNANYVMKKLSEHYPVLFRGRNDRVAHECIIDLRPIKEASGVTEMDIAKRLNDYGFHAPTMSFPVAGTLMIEPTESESKVELDRFIDAMVSIRAEIAKVEAGEWPADNNPLHNAPHTMADIMDSAFDSRPYSREVAVFPSAAVRTNKFWPTVNRIDDVYGDRNLFCACVPLSDYE.

Residue Lys-709 is modified to N6-(pyridoxal phosphate)lysine.

The protein belongs to the GcvP family. The glycine cleavage system is composed of four proteins: P, T, L and H. It depends on pyridoxal 5'-phosphate as a cofactor.

It catalyses the reaction N(6)-[(R)-lipoyl]-L-lysyl-[glycine-cleavage complex H protein] + glycine + H(+) = N(6)-[(R)-S(8)-aminomethyldihydrolipoyl]-L-lysyl-[glycine-cleavage complex H protein] + CO2. In terms of biological role, the glycine cleavage system catalyzes the degradation of glycine. The P protein binds the alpha-amino group of glycine through its pyridoxal phosphate cofactor; CO(2) is released and the remaining methylamine moiety is then transferred to the lipoamide cofactor of the H protein. The polypeptide is Glycine dehydrogenase (decarboxylating) (Shewanella oneidensis (strain ATCC 700550 / JCM 31522 / CIP 106686 / LMG 19005 / NCIMB 14063 / MR-1)).